A 68-amino-acid chain; its full sequence is ATP synthase F(0) complex subunit 8 (68 aa).

The chain crosses the membrane as a helical span at residues 8 to 24 (TWFTIIMAMLPTLYLIT). Lys54 carries the N6-acetyllysine; alternate modification. Lys54 is modified (N6-succinyllysine; alternate). Lys57 bears the N6-acetyllysine mark.

This sequence belongs to the ATPase protein 8 family. In terms of assembly, component of the ATP synthase complex composed at least of ATP5F1A/subunit alpha, ATP5F1B/subunit beta, ATP5MC1/subunit c (homooctomer), MT-ATP6/subunit a, MT-ATP8/subunit 8, ATP5ME/subunit e, ATP5MF/subunit f, ATP5MG/subunit g, ATP5MK/subunit k, ATP5MJ/subunit j, ATP5F1C/subunit gamma, ATP5F1D/subunit delta, ATP5F1E/subunit epsilon, ATP5PF/subunit F6, ATP5PB/subunit b, ATP5PD/subunit d, ATP5PO/subunit OSCP. ATP synthase complex consists of a soluble F(1) head domain (subunits alpha(3) and beta(3)) - the catalytic core - and a membrane F(0) domain - the membrane proton channel (subunits c, a, 8, e, f, g, k and j). These two domains are linked by a central stalk (subunits gamma, delta, and epsilon) rotating inside the F1 region and a stationary peripheral stalk (subunits F6, b, d, and OSCP). Interacts with PRICKLE3.

It is found in the mitochondrion membrane. In terms of biological role, subunit 8, of the mitochondrial membrane ATP synthase complex (F(1)F(0) ATP synthase or Complex V) that produces ATP from ADP in the presence of a proton gradient across the membrane which is generated by electron transport complexes of the respiratory chain. ATP synthase complex consist of a soluble F(1) head domain - the catalytic core - and a membrane F(1) domain - the membrane proton channel. These two domains are linked by a central stalk rotating inside the F(1) region and a stationary peripheral stalk. During catalysis, ATP synthesis in the catalytic domain of F(1) is coupled via a rotary mechanism of the central stalk subunits to proton translocation. In vivo, can only synthesize ATP although its ATP hydrolase activity can be activated artificially in vitro. Part of the complex F(0) domain. This chain is ATP synthase F(0) complex subunit 8, found in Papio hamadryas (Hamadryas baboon).